The following is a 353-amino-acid chain: MRLTIIIPTCNNEATIRQLLISIESKEHYRILCIDGGSTDQTIPMIERLPRELKHISLIQLQNASIATCINKGLMDIKMTDPHDSDAFMVINPTSIVLPGKLDRLTAAFKNNDNIDMVIGQRAYNYHGEWKLKSADEFIKDNRIVTLTEQPDLLSMMSFDGKLFSAKFAELQCDETLANTYNHTILVKAMQKATDIHLVSQMIVGDNDIDTHATSNDEDFNRYITEIMKIRQRVMEMLLLPEQRLLYSDMVDRILFNNSLKYYMNEHPAVTHTTIQLVKDYIMSMQHSDYVSQNMFDIINTVEFIGENWDREIYELWRQTLIQVGINRPTYKKFLIQLKGRKFAHRTKSMLKR.

It belongs to the glycosyltransferase 2 family.

This is Putative glycosyltransferase TagX (tagX) from Staphylococcus aureus (strain MSSA476).